The primary structure comprises 215 residues: Adenylate kinase (215 aa).

ATP is bound at residue 10–15; sequence GAGKGT. Residues 30–59 form an NMP region; that stretch reads STGDMFRAAMKNNTELGKKAKSFMDNGDLV. Residues Thr31, Arg36, 57-59, 85-88, and Gln92 each bind AMP; these read DLV and GFPR. An LID region spans residues 126–163; it reads GRWICRTCGKTYHEIYNPPKVPGKCDLDGGELYQRDDD. Arg127 is an ATP binding site. 2 residues coordinate Zn(2+): Cys130 and Cys133. 136–137 lines the ATP pocket; sequence TY. The Zn(2+) site is built by Cys150 and Asp153. Residues Arg160 and Arg171 each contribute to the AMP site. Gln199 is a binding site for ATP.

This sequence belongs to the adenylate kinase family. Monomer.

Its subcellular location is the cytoplasm. It carries out the reaction AMP + ATP = 2 ADP. It participates in purine metabolism; AMP biosynthesis via salvage pathway; AMP from ADP: step 1/1. Functionally, catalyzes the reversible transfer of the terminal phosphate group between ATP and AMP. Plays an important role in cellular energy homeostasis and in adenine nucleotide metabolism. In Listeria monocytogenes serotype 4b (strain CLIP80459), this protein is Adenylate kinase.